Consider the following 187-residue polypeptide: MPTQRKIETVADLKQRLERMQVAVVADYRGLSVADMTDLRKKLRESGAEFVVAKNTLTRIAARETGHEAIEPLLEGPTALAFAYDDVPKFVRAINEFNRGPKKITVRGGLLGTTLLKENVLDVVATLPTKDEVRAQVLGGLAAPVTGLAGIIAAPVNDIVNLLDATSKSILYALQARVDQLQPSSTS.

The protein belongs to the universal ribosomal protein uL10 family. Part of the ribosomal stalk of the 50S ribosomal subunit. The N-terminus interacts with L11 and the large rRNA to form the base of the stalk. The C-terminus forms an elongated spine to which L12 dimers bind in a sequential fashion forming a multimeric L10(L12)X complex.

Functionally, forms part of the ribosomal stalk, playing a central role in the interaction of the ribosome with GTP-bound translation factors. In Roseiflexus castenholzii (strain DSM 13941 / HLO8), this protein is Large ribosomal subunit protein uL10.